Reading from the N-terminus, the 356-residue chain is Histidinol-phosphate aminotransferase 2 (356 aa).

Lysine 213 is modified (N6-(pyridoxal phosphate)lysine).

Belongs to the class-II pyridoxal-phosphate-dependent aminotransferase family. Histidinol-phosphate aminotransferase subfamily. In terms of assembly, homodimer. Pyridoxal 5'-phosphate is required as a cofactor.

It carries out the reaction L-histidinol phosphate + 2-oxoglutarate = 3-(imidazol-4-yl)-2-oxopropyl phosphate + L-glutamate. It participates in amino-acid biosynthesis; L-histidine biosynthesis; L-histidine from 5-phospho-alpha-D-ribose 1-diphosphate: step 7/9. This Burkholderia mallei (strain ATCC 23344) protein is Histidinol-phosphate aminotransferase 2.